Reading from the N-terminus, the 257-residue chain is Transcription factor LBX2 (257 aa).

Residues 1 to 43 (MTSSSKDMKAGSVLQSSGEERRRGPLDQLPPPANSNKPLTPFS) are disordered. The tract at residues 1-46 (MTSSSKDMKAGSVLQSSGEERRRGPLDQLPPPANSNKPLTPFSIED) is required for convergent extension movement and hypaxial myogenesis during gastrulation. Required for the formation of thick and thin myofilaments. Required for myod1 expression in the pectoral fin bud. Required for continuous expression of cxcl12a in the posterior lateral mesoderm at the tail bud stage and in adaxial cells at the 10-somite stage. The homeobox DNA-binding region spans 126–185 (RRKSRTAFTNHQIYELEKRFLYQKYLSPADRDQIAQQLGLTNAQVITWFQNRRAKLKRDL). Residues 206-257 (LVSMEDMEDAHGGSGPISPSLSPRAFPQSPSSSRGQTTDEFSEEDEEIEVDD) form a disordered region. Residues 233 to 243 (QSPSSSRGQTT) are compositionally biased toward polar residues. Residues 245–257 (EFSEEDEEIEVDD) show a composition bias toward acidic residues.

Interacts (via N-terminus) with tle3a/gro2 (via C-terminus).

It localises to the nucleus. In terms of biological role, transcription factor required in several developmental processes. Involved in axis formation during embryonic development by inhibiting tle3a/gro2 from binding to tcf7l1a, thereby facilitating ctnnb1-mediated transcription of canonical Wnt/CTNNB1 signaling target genes. Regulates convergent extension movements and hypaxial myogenesis during gastrulation by activating non-canonical Wnt signaling via wnt5b. Required for the formation of myofibrils and fusion of fast muscle precursor cells, potentially via transcriptional regulation of genes specific to thick and thin myofilaments. Regulates the migration of the posterior lateral line primordium during embryonic development, possibly via regulation of cxcl12a/sdf1a expression in the posterior lateral mesoderm, thereby modulating the deposition of neuromasts at correct intervals. This Danio rerio (Zebrafish) protein is Transcription factor LBX2.